Here is a 456-residue protein sequence, read N- to C-terminus: Chromosomal replication initiator protein DnaA 1 (456 aa).

Positions 1-68 are domain I, interacts with DnaA modulators; that stretch reads MRAWEEFLLL…KANLINNNGK (68 aa). A domain II region spans residues 68–101; that stretch reads KPIRVRVTSLDKSTPFKESQIQQEKTAYFTMQYG. The tract at residues 102–320 is domain III, AAA+ region; that stretch reads DIDPQMSFAN…HALTTLAKRV (219 aa). The ATP site is built by S150, G152, K153, and T154. Positions 321 to 456 are domain IV, binds dsDNA; the sequence is AYKKLSHQLL…AYQSLDLIVD (136 aa).

The protein belongs to the DnaA family. As to quaternary structure, oligomerizes as a right-handed, spiral filament on DNA at oriC.

The protein resides in the cytoplasm. Functionally, plays an essential role in the initiation and regulation of chromosomal replication. ATP-DnaA binds to the origin of replication (oriC) to initiate formation of the DNA replication initiation complex once per cell cycle. Binds the DnaA box (a 9 base pair repeat at the origin) and separates the double-stranded (ds)DNA. Forms a right-handed helical filament on oriC DNA; dsDNA binds to the exterior of the filament while single-stranded (ss)DNA is stabiized in the filament's interior. The ATP-DnaA-oriC complex binds and stabilizes one strand of the AT-rich DNA unwinding element (DUE), permitting loading of DNA polymerase. After initiation quickly degrades to an ADP-DnaA complex that is not apt for DNA replication. Binds acidic phospholipids. This Chlamydia muridarum (strain MoPn / Nigg) protein is Chromosomal replication initiator protein DnaA 1.